The primary structure comprises 508 residues: Protein ultraspiracle (508 aa).

A modulating region spans residues methionine 1–leucine 103. Disordered stretches follow at residues proline 21–serine 40 and proline 55–proline 92. The span at serine 24 to serine 35 shows a compositional bias: polar residues. Serine 35 carries the post-translational modification Phosphoserine. Over residues serine 57–glutamine 90 the composition is skewed to low complexity. 2 consecutive NR C4-type zinc fingers follow at residues cysteine 104–cysteine 124 and cysteine 140–cysteine 164. A DNA-binding region (nuclear receptor) is located at residues cysteine 104–methionine 169. The interval lysine 170–glycine 223 is hinge. A disordered region spans residues arginine 178–aspartate 228. Positions serine 192–asparagine 224 are enriched in gly residues. Positions serine 239–proline 498 constitute an NR LBD domain.

It belongs to the nuclear hormone receptor family. NR2 subfamily. Heterodimer of USP and ECR. Only the heterodimer is capable of high-affinity binding to ecdysone.

The protein resides in the nucleus. Its function is as follows. Receptor for ecdysone. May be an important modulator of insect metamorphosis. Plays an important part in embryonic and post-embryonic development. Binds to ecdysone response elements (ECRES) such as in the promoter region of s15 chorion gene. This is Protein ultraspiracle (usp) from Drosophila melanogaster (Fruit fly).